The chain runs to 167 residues: MSNAKNTSAASPARKGHSHHDPASDEFRKEDFPFYWLARVHGRYTQNMERLLKKIDLDVPRWRVLWILNENGESSISEISTHAIAKLSTITKIVYRMKEDGLVDTAPSPEDGRVTQVRITEVGLQNIERMQEVTRELFQRSFKGLTEAQVQRLNRMLEVVFHNLETL.

Positions 1–10 (MSNAKNTSAA) are enriched in polar residues. Residues 1–25 (MSNAKNTSAASPARKGHSHHDPASD) are disordered. The HTH marR-type domain occupies 30 to 162 (EDFPFYWLAR…LNRMLEVVFH (133 aa)). Positions 76–99 (ISEISTHAIAKLSTITKIVYRMKE) form a DNA-binding region, H-T-H motif.

Its activity is regulated as follows. Exposure to indole-3-acetic acid (IAA) probably relieves the repressor activity. Probably acts as a repressor of iacA expression. The chain is HTH-type transcriptional repressor IacR from Pseudomonas putida (Arthrobacter siderocapsulatus).